We begin with the raw amino-acid sequence, 437 residues long: uncharacterized protein (437 aa).

3 stretches are compositionally biased toward basic residues: residues 1 to 29, 81 to 91, and 101 to 118; these read MDTP…RHRN, LRGRHPRVRRV, and RRRH…GRNR. Disordered regions lie at residues 1 to 31 and 77 to 437; these read MDTP…RNDH and EHVP…QGTR. Residues 119 to 132 show a composition bias toward basic and acidic residues; it reads HAGDRRAPGVDSRL. Basic residues predominate over residues 133–142; it reads RQQHQHPRGR. Basic and acidic residues predominate over residues 143–164; the sequence is HASDRVQDGAHPRRQRLREQPR. Residues 165-190 are compositionally biased toward basic residues; it reads HAGRPRRRQPPRRGRSRGTHRRHLRQ. Composition is skewed to basic and acidic residues over residues 198–209 and 217–253; these read GPDEDQAREFRG and HPPT…EAGR. Basic residues-rich tracts occupy residues 284–293 and 324–348; these read TVHRGGRLRG and PHSR…RVRH. The span at 371–382 shows a compositional bias: low complexity; sequence DAAAYASVPAHA.

This is an uncharacterized protein from Haloferax lucentense (strain DSM 14919 / JCM 9276 / NCIMB 13854 / Aa 2.2) (Haloferax alicantei).